A 306-amino-acid polypeptide reads, in one-letter code: Pantothenate kinase (306 aa).

ATP is bound at residue 91–98 (GSVAVGKS).

The protein belongs to the prokaryotic pantothenate kinase family.

The protein localises to the cytoplasm. It catalyses the reaction (R)-pantothenate + ATP = (R)-4'-phosphopantothenate + ADP + H(+). It participates in cofactor biosynthesis; coenzyme A biosynthesis; CoA from (R)-pantothenate: step 1/5. The protein is Pantothenate kinase of Streptococcus pneumoniae serotype 2 (strain D39 / NCTC 7466).